The primary structure comprises 334 residues: DNA polymerase beta (334 aa).

Positions 60, 62, and 65 each coordinate K(+). Na(+)-binding residues include K60, L62, and V65. K72 (nucleophile; Schiff-base intermediate with DNA; for 5'-dRP lyase activity) is an active-site residue. An Omega-N-methylarginine; by PRMT6 modification is found at R83. 3 residues coordinate K(+): T101, V103, and I106. Residues T101, V103, and I106 each coordinate Na(+). R149 is an a 2'-deoxyribonucleoside 5'-triphosphate binding site. An Omega-N-methylarginine; by PRMT6 modification is found at R152. Positions 180, 183, 189, and 190 each coordinate a 2'-deoxyribonucleoside 5'-triphosphate. Positions 183–192 are DNA-binding; that stretch reads RGAESSGDMD. 3 residues coordinate Mg(2+): D190, D192, and D255.

This sequence belongs to the DNA polymerase type-X family. In terms of assembly, monomer. It depends on Mg(2+) as a cofactor. Methylation by PRMT6 stimulates the polymerase activity by enhancing DNA binding and processivity. In terms of processing, ubiquitinated: monoubiquitinated by huwe1/arf-bp1. Monoubiquitinated protein is then the target of stub1/chip, which catalyzes polyubiquitination from monoubiquitin, leading to degradation by the proteasome. usp47 mediates the deubiquitination of monoubiquitinated protein, preventing polyubiquitination by STUB1/CHIP and its subsequent degradation.

Its subcellular location is the nucleus. It is found in the cytoplasm. The enzyme catalyses DNA(n) + a 2'-deoxyribonucleoside 5'-triphosphate = DNA(n+1) + diphosphate. It catalyses the reaction a 5'-end 2'-deoxyribose-2'-deoxyribonucleotide-DNA = (2E,4S)-4-hydroxypenten-2-al-5-phosphate + a 5'-end 5'-phospho-2'-deoxyribonucleoside-DNA + H(+). It carries out the reaction 2'-deoxyribonucleotide-(2'-deoxyribose 5'-phosphate)-2'-deoxyribonucleotide-DNA = a 3'-end 2'-deoxyribonucleotide-(2,3-dehydro-2,3-deoxyribose 5'-phosphate)-DNA + a 5'-end 5'-phospho-2'-deoxyribonucleoside-DNA + H(+). Its function is as follows. Repair polymerase that plays a key role in base-excision repair. During this process, the damaged base is excised by specific DNA glycosylases, the DNA backbone is nicked at the abasic site by an apurinic/apyrimidic (AP) endonuclease, and POLB removes 5'-deoxyribose-phosphate from the preincised AP site acting as a 5'-deoxyribose-phosphate lyase (5'-dRP lyase); through its DNA polymerase activity, it adds one nucleotide to the 3' end of the arising single-nucleotide gap. Conducts 'gap-filling' DNA synthesis in a stepwise distributive fashion rather than in a processive fashion as for other DNA polymerases. It is also able to cleave sugar-phosphate bonds 3' to an intact AP site, acting as an AP lyase. The sequence is that of DNA polymerase beta (polb) from Xenopus laevis (African clawed frog).